Here is a 101-residue protein sequence, read N- to C-terminus: NAD(P)H-quinone oxidoreductase subunit 4L, chloroplastic (101 aa).

3 helical membrane-spanning segments follow: residues 2-22, 30-52, and 61-81; these read ILEH…YGLI, ALMC…SDFF, and IFSI…LAIV.

This sequence belongs to the complex I subunit 4L family. In terms of assembly, NDH is composed of at least 16 different subunits, 5 of which are encoded in the nucleus.

The protein localises to the plastid. The protein resides in the chloroplast thylakoid membrane. The catalysed reaction is a plastoquinone + NADH + (n+1) H(+)(in) = a plastoquinol + NAD(+) + n H(+)(out). The enzyme catalyses a plastoquinone + NADPH + (n+1) H(+)(in) = a plastoquinol + NADP(+) + n H(+)(out). In terms of biological role, NDH shuttles electrons from NAD(P)H:plastoquinone, via FMN and iron-sulfur (Fe-S) centers, to quinones in the photosynthetic chain and possibly in a chloroplast respiratory chain. The immediate electron acceptor for the enzyme in this species is believed to be plastoquinone. Couples the redox reaction to proton translocation, and thus conserves the redox energy in a proton gradient. The polypeptide is NAD(P)H-quinone oxidoreductase subunit 4L, chloroplastic (Oenothera glazioviana (Large-flowered evening primrose)).